Here is a 127-residue protein sequence, read N- to C-terminus: uncharacterized protein (127 aa).

The protein belongs to the transcriptional regulatory CopG/NikR family.

This is an uncharacterized protein from Methanocaldococcus jannaschii (strain ATCC 43067 / DSM 2661 / JAL-1 / JCM 10045 / NBRC 100440) (Methanococcus jannaschii).